Consider the following 86-residue polypeptide: Chymotrypsin inhibitor (86 aa).

The signal sequence occupies residues 1-16 (MKTLCIFLVLVVAVAA). Disulfide bonds link Cys26-Cys58, Cys38-Cys50, Cys42-Cys82, and Cys60-Cys76. Positions 26–82 (CPPNKEFGSYGDCPPSCLKNPPNFCTLKLNYGCKCKEGYVLTRYQDYESDCIKPEEC) constitute a TIL domain.

The protein belongs to the serine protease inhibitor-like (TIL domain-containing) family. Only expressed in fat body.

It localises to the secreted. Serine protease inhibitor that inhibits chymotrypsin (IC(50)=34.13 nM, Ki=49.85 nM), microbial serine proteases (subtilisin A (IC(50)=21.31 nM, Ki=20.51 nM) and proteinase K (IC(50)=52.56 nM, Ki=65.42 nM)), as well as human neutrophil elastase (IC(50)=11.54 nM, Ki=8.74 nM), and porcine pancreatic elastase (IC(50)=19.07 nM, Ki=11.32 nM). The protein is Chymotrypsin inhibitor of Araneus ventricosus (Orbweaver spider).